Here is a 356-residue protein sequence, read N- to C-terminus: MSTYTYSAGPGMLPTEVMQEIQQHLLTFEYEGVSIIETSHRSASFQRVVDSLEWRLRRLMHIPENYAVLWLQGGATLQFSMIPMNLRKQNRFAYVDTGIWSKKAMEDAKHFGEVDVIHPLVDATGGMSFESSLVQEVDYLHVTLNNTIEGTRFTHIPEIDVPLIADASSNILAEQIDVERFGVIYAGAQKNIGPAGLTVVIIRRDLIQSLQLPSYLQYASHVDTLFNTPSTFSMYAAERVLKWVEDCGGVEAMERLNRQKSDRIYSYLEESTCFSPIVTGERRSLTNIPFSTGNQELDQRFERYALERGLLELGGHRSVGGLRASLYNAMPLEGAERLVDVMRAFEEETHVSHQNI.

Arginine 41 is a binding site for L-glutamate. Pyridoxal 5'-phosphate is bound by residues alanine 75–threonine 76, tryptophan 100, threonine 147, aspartate 166, and glutamine 189. The residue at position 190 (lysine 190) is an N6-(pyridoxal phosphate)lysine. Asparagine 227–threonine 228 contacts pyridoxal 5'-phosphate.

The protein belongs to the class-V pyridoxal-phosphate-dependent aminotransferase family. SerC subfamily. In terms of assembly, homodimer. Requires pyridoxal 5'-phosphate as cofactor.

Its subcellular location is the cytoplasm. It carries out the reaction O-phospho-L-serine + 2-oxoglutarate = 3-phosphooxypyruvate + L-glutamate. It catalyses the reaction 4-(phosphooxy)-L-threonine + 2-oxoglutarate = (R)-3-hydroxy-2-oxo-4-phosphooxybutanoate + L-glutamate. It participates in amino-acid biosynthesis; L-serine biosynthesis; L-serine from 3-phospho-D-glycerate: step 2/3. In terms of biological role, catalyzes the reversible conversion of 3-phosphohydroxypyruvate to phosphoserine and of 3-hydroxy-2-oxo-4-phosphonooxybutanoate to phosphohydroxythreonine. This is Phosphoserine aminotransferase from Exiguobacterium sp. (strain ATCC BAA-1283 / AT1b).